Consider the following 882-residue polypeptide: Translation initiation factor IF-2 (882 aa).

A disordered region spans residues Ile38–Asn294. Basic and acidic residues-rich tracts occupy residues Thr66–Gly76, Gly109–Ser128, and Pro207–Arg219. A compositionally biased stretch (basic residues) spans Pro282–Lys292. The 174-residue stretch at Ala383–Asp556 folds into the tr-type G domain. Residues Gly392–Thr399 form a G1 region. GTP is bound at residue Gly392–Thr399. Residues Gly417–His421 are G2. The segment at Asp438–Gly441 is G3. GTP-binding positions include Asp438–His442 and Asn492–Asp495. The G4 stretch occupies residues Asn492 to Asp495. Positions Ser528 to Lys530 are G5.

This sequence belongs to the TRAFAC class translation factor GTPase superfamily. Classic translation factor GTPase family. IF-2 subfamily.

It localises to the cytoplasm. In terms of biological role, one of the essential components for the initiation of protein synthesis. Protects formylmethionyl-tRNA from spontaneous hydrolysis and promotes its binding to the 30S ribosomal subunits. Also involved in the hydrolysis of GTP during the formation of the 70S ribosomal complex. The sequence is that of Translation initiation factor IF-2 from Syntrophomonas wolfei subsp. wolfei (strain DSM 2245B / Goettingen).